Reading from the N-terminus, the 334-residue chain is Heat shock factor 2-binding protein (334 aa).

Positions 14-51 are interaction with BRME1; that stretch reads MGTKEEFVKVRKKDLERLTTEVMQIRDFLPRILNGEVL. Residues 49–122 adopt a coiled-coil conformation; that stretch reads EVLESFQKLK…LLQQAEYCTE (74 aa). An interaction with BRCA2 region spans residues 83 to 334; it reads ARLETVQADN…EDLRTLEHNV (252 aa).

As to quaternary structure, associates with HSF2. The interaction seems to occur between the trimerization domain of HSF2 and the N-terminal hydrophilic region of HSF2BP. Interacts (via C-terminus) with BNC1. Interacts (via N-terminus) with BRCA2 and BRME1; the interactions are direct and allow the formation of a ternary complex. The complex BRME1:HSF2BP:BRCA2 interacts with SPATA22, MEIOB and RAD51. Sumoylated by UBE2I in response to MEKK1-mediated stimuli. In terms of tissue distribution, testis specific. Overexpressed in some tumors.

The protein localises to the cytoplasm. Its subcellular location is the chromosome. Functionally, meiotic recombination factor component of recombination bridges involved in meiotic double-strand break repair. Modulates the localization of recombinases DMC1:RAD51 to meiotic double-strand break (DSB) sites through the interaction with BRCA2 and its recruitment during meiotic recombination. Indispensable for the DSB repair, homologous synapsis, and crossover formation that are needed for progression past metaphase I, is essential for spermatogenesis and male fertility. Required for proper recombinase recruitment in female meiosis. Inhibits BNC1 transcriptional activity during spermatogenesis, probably by sequestering it in the cytoplasm. May be involved in modulating HSF2 activation in testis. This chain is Heat shock factor 2-binding protein, found in Homo sapiens (Human).